Consider the following 238-residue polypeptide: Ribonuclease PH (238 aa).

Residues arginine 86 and 124–126 (GTR) each bind phosphate.

This sequence belongs to the RNase PH family. As to quaternary structure, homohexameric ring arranged as a trimer of dimers.

The catalysed reaction is tRNA(n+1) + phosphate = tRNA(n) + a ribonucleoside 5'-diphosphate. Its function is as follows. Phosphorolytic 3'-5' exoribonuclease that plays an important role in tRNA 3'-end maturation. Removes nucleotide residues following the 3'-CCA terminus of tRNAs; can also add nucleotides to the ends of RNA molecules by using nucleoside diphosphates as substrates, but this may not be physiologically important. Probably plays a role in initiation of 16S rRNA degradation (leading to ribosome degradation) during starvation. In Geobacter metallireducens (strain ATCC 53774 / DSM 7210 / GS-15), this protein is Ribonuclease PH.